A 316-amino-acid chain; its full sequence is Beta-ketoacyl-[acyl-carrier-protein] synthase III (316 aa).

Active-site residues include Cys112 and His243. Residues 244–248 form an ACP-binding region; it reads QANIR. The active site involves Asn273.

The protein belongs to the thiolase-like superfamily. FabH family. As to quaternary structure, homodimer.

It localises to the cytoplasm. The enzyme catalyses malonyl-[ACP] + acetyl-CoA + H(+) = 3-oxobutanoyl-[ACP] + CO2 + CoA. It participates in lipid metabolism; fatty acid biosynthesis. In terms of biological role, catalyzes the condensation reaction of fatty acid synthesis by the addition to an acyl acceptor of two carbons from malonyl-ACP. Catalyzes the first condensation reaction which initiates fatty acid synthesis and may therefore play a role in governing the total rate of fatty acid production. Possesses both acetoacetyl-ACP synthase and acetyl transacylase activities. Its substrate specificity determines the biosynthesis of branched-chain and/or straight-chain of fatty acids. The sequence is that of Beta-ketoacyl-[acyl-carrier-protein] synthase III from Actinobacillus pleuropneumoniae serotype 5b (strain L20).